Here is a 196-residue protein sequence, read N- to C-terminus: Ankyrin repeat domain-containing protein 66 (196 aa).

ANK repeat units lie at residues 7 to 37 (SDMT…DPNY), 43 to 72 (NDRT…RPCL), and 76 to 105 (VGWT…AIDA). Residues 152–196 (ERDEDWDAKKRELELSLPSLNQNMNKKNKKSRGPTRPSNTKGRRV) form a disordered region. Positions 187–196 (RPSNTKGRRV) are enriched in polar residues.

The polypeptide is Ankyrin repeat domain-containing protein 66 (ANKRD66) (Homo sapiens (Human)).